Reading from the N-terminus, the 128-residue chain is Small ribosomal subunit protein uS11 (128 aa).

This sequence belongs to the universal ribosomal protein uS11 family. In terms of assembly, part of the 30S ribosomal subunit. Interacts with proteins S7 and S18. Binds to IF-3.

Functionally, located on the platform of the 30S subunit, it bridges several disparate RNA helices of the 16S rRNA. Forms part of the Shine-Dalgarno cleft in the 70S ribosome. The sequence is that of Small ribosomal subunit protein uS11 from Synechococcus sp. (strain JA-2-3B'a(2-13)) (Cyanobacteria bacterium Yellowstone B-Prime).